Reading from the N-terminus, the 142-residue chain is Large ribosomal subunit protein uL13 (142 aa).

The protein belongs to the universal ribosomal protein uL13 family. Part of the 50S ribosomal subunit.

Its function is as follows. This protein is one of the early assembly proteins of the 50S ribosomal subunit, although it is not seen to bind rRNA by itself. It is important during the early stages of 50S assembly. The protein is Large ribosomal subunit protein uL13 of Shewanella amazonensis (strain ATCC BAA-1098 / SB2B).